A 136-amino-acid chain; its full sequence is MSATSNMRVFLPVLLAALLGMEQVHSLMCFSCTDQKNNINCLWPVSCQEKDHYCITLSAAAGFGNVNLGYTLNKGCSPICPSENVNLNLGVASVNSYCCQSSFCNFSAAGLGLRASIPLLGLGLLLSLLALLQLSP.

The first 26 residues, 1–26 (MSATSNMRVFLPVLLAALLGMEQVHS), serve as a signal peptide directing secretion. The 92-residue stretch at 27–118 (LMCFSCTDQK…AGLGLRASIP (92 aa)) folds into the UPAR/Ly6 domain. Intrachain disulfides connect C29–C54, C32–C41, C47–C76, C80–C98, and C99–C104. Residue N105 is glycosylated (N-linked (GlcNAc...) asparagine). A lipid anchor (GPI-anchor amidated alanine) is attached at A108. A propeptide spans 109 to 136 (AGLGLRASIPLLGLGLLLSLLALLQLSP) (removed in mature form).

In terms of assembly, interacts with CHRNA4. Interacts with CD3Z/CD247. In terms of tissue distribution, ubiquitously expressed in mouse adult tissues with maximal expression in the lung and the salivary gland. Expression is strikingly lower in the fetal tissues except for the placenta. Present in thymus where its expression is observed in immature thymocytes and thymic stromal cells. Also found on functionally active T-cells as well as B-cells and thymic dendritic cells.

It localises to the cell membrane. Functionally, GPI-anchored cell surface protein that regulates T-lymphocytes proliferation, differentiation, and activation. Regulates the T-cell receptor (TCR) signaling by interacting with component CD3Z/CD247 at the plasma membrane, leading to CD3Z/CD247 phosphorylation modulation. Restricts the entry of murine coronavirus, mouse hepatitis virus, by interfering with spike protein-mediated membrane fusion. Also plays an essential role in placenta formation by acting as the main receptor for syncytin-A (SynA). Therefore, participates in the normal fusion of syncytiotrophoblast layer I (SynT-I) and in the proper morphogenesis of both fetal and maternal vasculatures within the placenta. May also act as a modulator of nicotinic acetylcholine receptors (nAChRs) activity. In vitro inhibits alpha-3:beta-4-containing nAChRs maximum response. This is Lymphocyte antigen 6E from Mus musculus (Mouse).